Here is a 165-residue protein sequence, read N- to C-terminus: Large ribosomal subunit protein uL10 (165 aa).

The protein belongs to the universal ribosomal protein uL10 family. As to quaternary structure, part of the ribosomal stalk of the 50S ribosomal subunit. The N-terminus interacts with L11 and the large rRNA to form the base of the stalk. The C-terminus forms an elongated spine to which L12 dimers bind in a sequential fashion forming a multimeric L10(L12)X complex.

In terms of biological role, forms part of the ribosomal stalk, playing a central role in the interaction of the ribosome with GTP-bound translation factors. In Pectobacterium carotovorum subsp. carotovorum (strain PC1), this protein is Large ribosomal subunit protein uL10.